The following is a 344-amino-acid chain: MQLSDFNFDLPDELIARYPLDTRSASRLLHLDAHGHYHDHAFTDILDLINDGDLLVLNDTKVMKARLKGKRASGGAIEILVERMLDNQIAHCHIKASNTPKAGAELFVGENGIKVTVQGRHENLFVVEFSEPILSVLDRYGQLPIPPYFNREAEEIDTERYQTVFHDPQKIASVAAPTASLHFDQDLLEKLAAKNIQKTFVTLHVGAGTFMPVRTDDIKNHIMHSEWCDVPESTAELIRQTKARGNKVIAVGTTATRALESAAQANGGKIDAWTGDTQIFIYPGYQFCVVDRLITNFHLPESTLLMLVSALSNRNNILSAYEHAVQSKYRFFSYGDAMLIDQAV.

It belongs to the QueA family. In terms of assembly, monomer.

The protein localises to the cytoplasm. The catalysed reaction is 7-aminomethyl-7-carbaguanosine(34) in tRNA + S-adenosyl-L-methionine = epoxyqueuosine(34) in tRNA + adenine + L-methionine + 2 H(+). Its pathway is tRNA modification; tRNA-queuosine biosynthesis. Transfers and isomerizes the ribose moiety from AdoMet to the 7-aminomethyl group of 7-deazaguanine (preQ1-tRNA) to give epoxyqueuosine (oQ-tRNA). In Acinetobacter baylyi (strain ATCC 33305 / BD413 / ADP1), this protein is S-adenosylmethionine:tRNA ribosyltransferase-isomerase.